Reading from the N-terminus, the 1184-residue chain is DNA polymerase III subunit alpha (1184 aa).

It belongs to the DNA polymerase type-C family. DnaE subfamily. The Pol III holoenzyme complex contains at least 10 different subunits organized into 3 functionally essential subassemblies: the Pol III core, the beta sliding clamp processivity factor and the clamp-loading complex. The Pol III core (subunits alpha, epsilon and theta) contains the polymerase and the 3'-5' exonuclease proofreading activities. The polymerase is tethered to the template via the dimeric beta sliding clamp processivity factor. The clamp loader (also called gamma complex) assembles the beta sliding clamp onto the primed template and plays a central role in the organization and communication at the replication fork. The clamp-loading complex contains delta, delta', psi and chi, and 3 copies of either or both of two different DnaX proteins, gamma and tau. The DNA replisome complex has a single clamp loader (3 tau and 1 each of delta, delta', psi and chi subunits) which binds 3 Pol III cores (1 core on the leading strand and 2 on the lagging strand) each with a beta sliding clamp dimer. Interacts with the beta-sliding clamp (DnaN). Co-immunoprecipitates with DarG in the presence and absence of darT.

It is found in the cytoplasm. It carries out the reaction DNA(n) + a 2'-deoxyribonucleoside 5'-triphosphate = DNA(n+1) + diphosphate. Its function is as follows. DNA polymerase III is a complex, multichain enzyme responsible for most of the replicative synthesis in bacteria. Pol III also exhibits 3' to 5' exonuclease activity. The alpha chain is the DNA polymerase. The protein is DNA polymerase III subunit alpha (dnaE1) of Mycobacterium tuberculosis (strain ATCC 25618 / H37Rv).